The chain runs to 333 residues: Glycerol-3-phosphate dehydrogenase [NAD(P)+] (333 aa).

3 residues coordinate NADPH: Ser-10, Trp-11, and Lys-105. Positions 105, 136, and 138 each coordinate sn-glycerol 3-phosphate. Ala-140 is an NADPH binding site. Residues Lys-191, Asp-244, Ser-254, Arg-255, and Asn-256 each coordinate sn-glycerol 3-phosphate. Lys-191 (proton acceptor) is an active-site residue. An NADPH-binding site is contributed by Arg-255. NADPH is bound by residues Val-279 and Glu-281.

Belongs to the NAD-dependent glycerol-3-phosphate dehydrogenase family.

It localises to the cytoplasm. The enzyme catalyses sn-glycerol 3-phosphate + NAD(+) = dihydroxyacetone phosphate + NADH + H(+). It carries out the reaction sn-glycerol 3-phosphate + NADP(+) = dihydroxyacetone phosphate + NADPH + H(+). Its pathway is membrane lipid metabolism; glycerophospholipid metabolism. Functionally, catalyzes the reduction of the glycolytic intermediate dihydroxyacetone phosphate (DHAP) to sn-glycerol 3-phosphate (G3P), the key precursor for phospholipid synthesis. The protein is Glycerol-3-phosphate dehydrogenase [NAD(P)+] of Trichlorobacter lovleyi (strain ATCC BAA-1151 / DSM 17278 / SZ) (Geobacter lovleyi).